The sequence spans 317 residues: Porphobilinogen deaminase (317 aa).

The residue at position 240 (C240) is an S-(dipyrrolylmethanemethyl)cysteine.

Belongs to the HMBS family. In terms of assembly, monomer. Dipyrromethane is required as a cofactor.

The catalysed reaction is 4 porphobilinogen + H2O = hydroxymethylbilane + 4 NH4(+). It participates in porphyrin-containing compound metabolism; protoporphyrin-IX biosynthesis; coproporphyrinogen-III from 5-aminolevulinate: step 2/4. Functionally, tetrapolymerization of the monopyrrole PBG into the hydroxymethylbilane pre-uroporphyrinogen in several discrete steps. In Nitratidesulfovibrio vulgaris (strain DSM 19637 / Miyazaki F) (Desulfovibrio vulgaris), this protein is Porphobilinogen deaminase.